We begin with the raw amino-acid sequence, 644 residues long: SPbeta prophage-derived uncharacterized protein YomE (644 aa).

This chain is SPbeta prophage-derived uncharacterized protein YomE (yomE), found in Bacillus subtilis (strain 168).